Reading from the N-terminus, the 411-residue chain is Mitotic apparatus protein p62 (411 aa).

Acidic residues-rich tracts occupy residues 134–156, 183–201, and 246–321; these read AYEVGDEDLEDEDEGEEDEEEEE, ELDEDEDDDEEEEEEEEEI, and DDDE…EEDS. The tract at residues 134–378 is disordered; the sequence is AYEVGDEDLE…KSPSKPKKEE (245 aa). The segment covering 351 to 367 has biased composition (basic and acidic residues); the sequence is GMKEKKTYSLEDMKQDL.

The protein belongs to the nucleoplasmin family. Post-translationally, phosphorylated by CaM-kinase II in vitro.

The protein localises to the nucleus. Its function is as follows. Required for mitotic progression. Binds to chromatin. The sequence is that of Mitotic apparatus protein p62 from Lytechinus pictus (Painted sea urchin).